The chain runs to 230 residues: MKQLEELLSTSFDIQFNDLTLLETAFTHTSYANEHRLLNVSHNERLEFLGDAVLQLIISEYLFAKYPKKTEGDMSKLRSMIVREESLAGFSRFCSFDAYIKLGKGEEKSGGRRRDTILGDLFEAFLGALLLDKGIDAVRRFLKQVMIPQVEKGNFERVKDYKTCLQEFLQTKGDVVIDYQVISEKGPAHAKQFEVSIVVNGAVLSKGLGKSKKLAEQDAAKNALAQLSEV.

Residues 1-134 (MKQLEELLST…FLGALLLDKG (134 aa)) form the RNase III domain. A Mg(2+)-binding site is contributed by Glu-47. Residue Asp-51 is part of the active site. The Mg(2+) site is built by Asp-120 and Glu-123. The active site involves Glu-123. Residues 160–229 (DYKTCLQEFL…AKNALAQLSE (70 aa)) form the DRBM domain.

Belongs to the ribonuclease III family. As to quaternary structure, homodimer. Requires Mg(2+) as cofactor.

The protein localises to the cytoplasm. It catalyses the reaction Endonucleolytic cleavage to 5'-phosphomonoester.. In terms of biological role, digests double-stranded RNA. Involved in the processing of primary rRNA transcript to yield the immediate precursors to the large and small rRNAs (23S and 16S). Processes some mRNAs, and tRNAs when they are encoded in the rRNA operon. Processes pre-crRNA and tracrRNA of type II CRISPR loci if present in the organism. The polypeptide is Ribonuclease 3 (Streptococcus pyogenes serotype M49 (strain NZ131)).